Reading from the N-terminus, the 159-residue chain is Na(+)/H(+) antiporter subunit E1 (159 aa).

The next 4 membrane-spanning stretches (helical) occupy residues 1–21 (MAIQFVINLLVSVIWLLVTNS), 27–47 (FVLGFILGLFLVYLLHRVLPG), 60–80 (LIITFLTELIKANFGVLKIIL), and 101–121 (WQLVLLSNLITLTPGTVVLGI).

Belongs to the CPA3 antiporters (TC 2.A.63) subunit E family. As to quaternary structure, may form a heterooligomeric complex that consists of seven subunits: mnhA1, mnhB1, mnhC1, mnhD1, mnhE1, mnhF1 and mnhG1.

The protein resides in the cell membrane. Its function is as follows. Mnh complex is a Na(+)/H(+) antiporter involved in Na(+) excretion. This is Na(+)/H(+) antiporter subunit E1 (mnhE1) from Staphylococcus epidermidis (strain ATCC 35984 / DSM 28319 / BCRC 17069 / CCUG 31568 / BM 3577 / RP62A).